We begin with the raw amino-acid sequence, 179 residues long: ATP-dependent protease subunit HslV (179 aa).

Thr7 is a catalytic residue. The Na(+) site is built by Ala162, Cys165, and Thr168.

The protein belongs to the peptidase T1B family. HslV subfamily. In terms of assembly, a double ring-shaped homohexamer of HslV is capped on each side by a ring-shaped HslU homohexamer. The assembly of the HslU/HslV complex is dependent on binding of ATP.

The protein resides in the cytoplasm. It carries out the reaction ATP-dependent cleavage of peptide bonds with broad specificity.. Its activity is regulated as follows. Allosterically activated by HslU binding. Functionally, protease subunit of a proteasome-like degradation complex believed to be a general protein degrading machinery. The chain is ATP-dependent protease subunit HslV from Nitrosococcus oceani (strain ATCC 19707 / BCRC 17464 / JCM 30415 / NCIMB 11848 / C-107).